A 528-amino-acid chain; its full sequence is Biotin carboxylase 1, chloroplastic (528 aa).

Residues 1-51 constitute a chloroplast transit peptide; sequence MEATLPVCKSVTSTPGLFMGKTSGIRSSQCSFMMGNKVNFPRQRAQTAHVH. ATP contacts are provided by residues Lys179, Lys221, 227–228, 263–266, and His271; these read GG and EKYV. In terms of domain architecture, ATP-grasp spans 183–380; the sequence is RETMKKAGVP…LIEEQIRVAM (198 aa). Lys300 contacts hydrogencarbonate. Positions 338 and 351 each coordinate ATP. The Mg(2+) site is built by Glu338, Glu351, and Asn353. 3 residues coordinate Mn(2+): Glu338, Glu351, and Asn353. Arg355, Val358, and Arg401 together coordinate hydrogencarbonate. Arg355 is a catalytic residue. Arg401 provides a ligand contact to biotin.

In terms of assembly, acetyl-CoA carboxylase is a heterohexamer composed of biotin carboxyl carrier protein, biotin carboxylase and two subunits each of ACCase subunit alpha and ACCase plastid-coded subunit beta (accD). The cofactor is Mg(2+). It depends on Mn(2+) as a cofactor.

It localises to the plastid. The protein resides in the chloroplast. The catalysed reaction is N(6)-biotinyl-L-lysyl-[protein] + hydrogencarbonate + ATP = N(6)-carboxybiotinyl-L-lysyl-[protein] + ADP + phosphate + H(+). It participates in lipid metabolism; malonyl-CoA biosynthesis; malonyl-CoA from acetyl-CoA: step 1/1. This protein is a component of the acetyl coenzyme A carboxylase complex; first, biotin carboxylase catalyzes the carboxylation of the carrier protein and then the transcarboxylase transfers the carboxyl group to form malonyl-CoA. In Populus trichocarpa (Western balsam poplar), this protein is Biotin carboxylase 1, chloroplastic.